The sequence spans 550 residues: Membrane protein insertase YidC (550 aa).

A helical transmembrane segment spans residues asparagine 6–aspartate 26. 2 disordered regions span residues alanine 28–alanine 54 and glutamine 111–tyrosine 132. A compositionally biased stretch (low complexity) spans lysine 30–valine 52. Positions glutamine 111 to lysine 127 are enriched in polar residues. Helical transmembrane passes span lysine 346–valine 366, leucine 421–leucine 441, leucine 459–isoleucine 479, and proline 500–valine 520.

Belongs to the OXA1/ALB3/YidC family. Type 1 subfamily. Interacts with the Sec translocase complex via SecD. Specifically interacts with transmembrane segments of nascent integral membrane proteins during membrane integration.

Its subcellular location is the cell inner membrane. Required for the insertion and/or proper folding and/or complex formation of integral membrane proteins into the membrane. Involved in integration of membrane proteins that insert both dependently and independently of the Sec translocase complex, as well as at least some lipoproteins. Aids folding of multispanning membrane proteins. The sequence is that of Membrane protein insertase YidC from Cronobacter sakazakii (strain ATCC BAA-894) (Enterobacter sakazakii).